The following is a 57-amino-acid chain: UPF0391 membrane protein bsl5717 (57 aa).

The next 2 helical transmembrane spans lie at 6-26 and 35-55; these read WALI…TGIS and FLFY…LTIF.

This sequence belongs to the UPF0391 family.

Its subcellular location is the cell membrane. In Bradyrhizobium diazoefficiens (strain JCM 10833 / BCRC 13528 / IAM 13628 / NBRC 14792 / USDA 110), this protein is UPF0391 membrane protein bsl5717.